We begin with the raw amino-acid sequence, 2344 residues long: Peroxide stress-activated histidine kinase mak3 (2344 aa).

In terms of domain architecture, Protein kinase spans 1–295 (MYSQHELRNK…GIVNDLEACL (295 aa)). A phosphoserine mark is found at Ser-12, Ser-16, and Ser-17. The segment covering 486–503 (SGNTRKTSLLGSNHSSYS) has biased composition (polar residues). The tract at residues 486 to 506 (SGNTRKTSLLGSNHSSYSDKL) is disordered. TPR repeat units lie at residues 829–862 (CHYL…IPHE) and 1340–1373 (AFAF…YAAL). In terms of domain architecture, PAC spans 1730-1781 (FELEIRIKRKDGVYRWNLTRCTPTTNEKNRTSFLCATIDIDDQKKARATALE). Residues 1792–2018 (NISHELRTPF…TFKICYDLKI (227 aa)) enclose the Histidine kinase domain. Position 1795 is a phosphohistidine; by autocatalysis (His-1795). One can recognise a Response regulatory domain in the interval 2211-2333 (KILIAEDNPI…TLIKMLLQYL (123 aa)). Asp-2263 carries the post-translational modification 4-aspartylphosphate.

The protein localises to the cytoplasm. It carries out the reaction ATP + protein L-histidine = ADP + protein N-phospho-L-histidine.. Functionally, involved in the control of the SAPK-dependent transcriptional response to peroxide stress. Regulates sty1 activity. This is Peroxide stress-activated histidine kinase mak3 (mak3) from Schizosaccharomyces pombe (strain 972 / ATCC 24843) (Fission yeast).